A 137-amino-acid polypeptide reads, in one-letter code: NADH dehydrogenase [ubiquinone] 1 beta subcomplex subunit 7 (137 aa).

The N-myristoyl glycine moiety is linked to residue glycine 2. A CHCH domain is found at 56–98; the sequence is RDYCAHYLIRLLKCKRDSFPNFLACKHEQHDWDYCEHLDYVKR. Residues 59–69 carry the Cx9C motif 1 motif; the sequence is CAHYLIRLLKC. Cystine bridges form between cysteine 59-cysteine 90 and cysteine 69-cysteine 80. Serine 73 is modified (phosphoserine). Positions 80–90 match the Cx9C motif 2 motif; it reads CKHEQHDWDYC.

This sequence belongs to the complex I NDUFB7 subunit family. Complex I is composed of 45 different subunits.

Its subcellular location is the mitochondrion inner membrane. The protein localises to the mitochondrion intermembrane space. Accessory subunit of the mitochondrial membrane respiratory chain NADH dehydrogenase (Complex I), that is believed not to be involved in catalysis. Complex I functions in the transfer of electrons from NADH to the respiratory chain. The immediate electron acceptor for the enzyme is believed to be ubiquinone. This chain is NADH dehydrogenase [ubiquinone] 1 beta subcomplex subunit 7 (Ndufb7), found in Mus musculus (Mouse).